The primary structure comprises 196 residues: Lipoprotein signal peptidase (196 aa).

2 helical membrane-spanning segments follow: residues 75–95 (IVFL…MMSS) and 97–117 (TIGG…NLID). Catalysis depends on residues Asp126 and Asp144. A helical transmembrane segment spans residues 135 to 155 (YSFPVFNLADCFITLGVIILV).

This sequence belongs to the peptidase A8 family.

The protein resides in the cell inner membrane. It catalyses the reaction Release of signal peptides from bacterial membrane prolipoproteins. Hydrolyzes -Xaa-Yaa-Zaa-|-(S,diacylglyceryl)Cys-, in which Xaa is hydrophobic (preferably Leu), and Yaa (Ala or Ser) and Zaa (Gly or Ala) have small, neutral side chains.. It functions in the pathway protein modification; lipoprotein biosynthesis (signal peptide cleavage). Its function is as follows. This protein specifically catalyzes the removal of signal peptides from prolipoproteins. This Rickettsia bellii (strain OSU 85-389) protein is Lipoprotein signal peptidase.